Here is a 366-residue protein sequence, read N- to C-terminus: GTPase Obg (366 aa).

In terms of domain architecture, Obg spans 1–161 (MRFVDEARIQ…FNLRLELKIL (161 aa)). The disordered stretch occupies residues 121–148 (SGGRGGKGNEHFKSSTMRAPRFSQPGEP). The OBG-type G domain occupies 162–334 (ADAGLIGLPN…LVQELWQVCE (173 aa)). GTP contacts are provided by residues 168–175 (GLPNAGKS), 193–197 (FTTLT), 217–220 (DIPG), 287–290 (NKID), and 315–317 (SAR). Mg(2+) is bound by residues serine 175 and threonine 195.

It belongs to the TRAFAC class OBG-HflX-like GTPase superfamily. OBG GTPase family. Monomer. Mg(2+) is required as a cofactor.

The protein resides in the cytoplasm. In terms of biological role, an essential GTPase which binds GTP, GDP and possibly (p)ppGpp with moderate affinity, with high nucleotide exchange rates and a fairly low GTP hydrolysis rate. Plays a role in control of the cell cycle, stress response, ribosome biogenesis and in those bacteria that undergo differentiation, in morphogenesis control. This chain is GTPase Obg, found in Desulfovibrio desulfuricans (strain ATCC 27774 / DSM 6949 / MB).